Here is a 571-residue protein sequence, read N- to C-terminus: Proline--tRNA ligase (571 aa).

It belongs to the class-II aminoacyl-tRNA synthetase family. ProS type 1 subfamily. As to quaternary structure, homodimer.

It localises to the cytoplasm. It carries out the reaction tRNA(Pro) + L-proline + ATP = L-prolyl-tRNA(Pro) + AMP + diphosphate. Functionally, catalyzes the attachment of proline to tRNA(Pro) in a two-step reaction: proline is first activated by ATP to form Pro-AMP and then transferred to the acceptor end of tRNA(Pro). As ProRS can inadvertently accommodate and process non-cognate amino acids such as alanine and cysteine, to avoid such errors it has two additional distinct editing activities against alanine. One activity is designated as 'pretransfer' editing and involves the tRNA(Pro)-independent hydrolysis of activated Ala-AMP. The other activity is designated 'posttransfer' editing and involves deacylation of mischarged Ala-tRNA(Pro). The misacylated Cys-tRNA(Pro) is not edited by ProRS. The sequence is that of Proline--tRNA ligase from Pseudomonas paraeruginosa (strain DSM 24068 / PA7) (Pseudomonas aeruginosa (strain PA7)).